Reading from the N-terminus, the 295-residue chain is Indole-3-glycerol phosphate synthase (295 aa).

The protein belongs to the TrpC family.

The catalysed reaction is 1-(2-carboxyphenylamino)-1-deoxy-D-ribulose 5-phosphate + H(+) = (1S,2R)-1-C-(indol-3-yl)glycerol 3-phosphate + CO2 + H2O. It functions in the pathway amino-acid biosynthesis; L-tryptophan biosynthesis; L-tryptophan from chorismate: step 4/5. The protein is Indole-3-glycerol phosphate synthase of Prochlorococcus marinus (strain NATL2A).